We begin with the raw amino-acid sequence, 440 residues long: Enolase (440 aa).

Residues 120 to 189 (KAAAAEKRVP…TEAMRQGAEV (70 aa)) form an igE-binding determinant region. Residues His159 and Glu168 each coordinate substrate. Glu211 acts as the Proton donor in catalysis. Mg(2+) is bound by residues Asp246, Glu297, and Asp324. Positions 297 and 324 each coordinate substrate. Lys349 (proton acceptor) is an active-site residue. Residues 376–379 (SHRS) and Lys400 each bind substrate.

Belongs to the enolase family. As to quaternary structure, homodimer. The cofactor is Mg(2+).

Its subcellular location is the cytoplasm. It carries out the reaction (2R)-2-phosphoglycerate = phosphoenolpyruvate + H2O. Its pathway is carbohydrate degradation; glycolysis; pyruvate from D-glyceraldehyde 3-phosphate: step 4/5. This Davidiella tassiana (Mycosphaerella tassiana) protein is Enolase (ENO).